The sequence spans 590 residues: Negative elongation factor D (590 aa).

Residues 15–43 (FGSAAEWGDEADGGQQEDDYGEGEDDAEV) are disordered. Over residues 21-43 (WGDEADGGQQEDDYGEGEDDAEV) the composition is skewed to acidic residues.

Belongs to the NELF-D family. In terms of assembly, the NELF complex is composed of NELFA, NELFB, NELFCD and NELFE; NELFA and NELFCD form a stable subcomplex that binds primarily through NELFCD to the N-terminus of NELFB. Binds RNA which may help to stabilize the NELF complex on nucleic acid. In vitro, the NELFA:NELFCD subcomplex binds to ssDNA and ssRNA in a sequence- and structure-dependent manner. Interacts with ARAF1. Interacts with PCF11. Interacts with NELFB. Interacts with KAT8.

Its subcellular location is the nucleus. Its function is as follows. Essential component of the NELF complex, a complex that negatively regulates the elongation of transcription by RNA polymerase II. The NELF complex, which acts via an association with the DSIF complex and causes transcriptional pausing, is counteracted by the P-TEFb kinase complex. This is Negative elongation factor D (NELFCD) from Sus scrofa (Pig).